A 275-amino-acid chain; its full sequence is Multi-heme protein MamP (275 aa).

Residues 1–6 (MNSKVA) lie on the Cytoplasmic side of the membrane. Positions 7–20 (LLVVGLAVVLALVI) form a transmembrane segment. The Lumenal portion of the chain corresponds to 21–275 (GRQGPVAPQA…GPCEACHVIK (255 aa)). A PDZ region spans residues 89–206 (KLKVFEGHWQ…GGLGFAQLEG (118 aa)). An MCR (magnetochrome) 1 motif is present at residues 210-230 (ILAGDPRPHGYRGACTDCHPI). The heme site is built by cysteine 224, cysteine 227, histidine 228, cysteine 268, cysteine 271, and histidine 272. Residues 250–274 (ITRDMVARSVNPHEVRGPCEACHVI) carry the MCR 2 motif.

Belongs to the magnetosome MamP family. As to quaternary structure, homodimer. It depends on heme as a cofactor. In terms of processing, subject to proteolytic cleavage which requires both MamE and MamO.

The protein localises to the cell inner membrane. Functionally, involved in redox-control of magnetite formation; oxidizes Fe(2+) to Fe(3+) or to mixed-valent Fe(2+)-Fe(3+) oxide minerals. May control magnetite crystal size and number. Overproduction of MamP leads to more crystals than normal during exponential growth of normal size; in stationary phase crystal numbers become wild-type. In Paramagnetospirillum magneticum (strain ATCC 700264 / AMB-1) (Magnetospirillum magneticum), this protein is Multi-heme protein MamP (mamP).